A 225-amino-acid polypeptide reads, in one-letter code: Lipid A 4'-phosphatase (225 aa).

6 helical membrane passes run 29–49 (SAFT…YILL), 51–71 (NFHW…ITFA), 110–130 (FGFP…LICL), 136–156 (LSIF…YLGL), 160–180 (GDLV…YFIA), and 203–223 (TEVM…YSIV).

Belongs to the lipid A LpxF 4'-phosphatase family.

It is found in the cell inner membrane. The protein operates within bacterial outer membrane biogenesis; LPS lipid A biosynthesis. Functionally, probably removes the 4'-phosphate group from lipid A. Removal of this phosphate group confers resistance to cationic antimicrobial peptides (CAMPs), inflammation-associated peptides produced by the human host. This LPS modification helps maintain the stability of this commensal bacterium in gut microbiota. The polypeptide is Lipid A 4'-phosphatase (Bacteroides thetaiotaomicron (strain ATCC 29148 / DSM 2079 / JCM 5827 / CCUG 10774 / NCTC 10582 / VPI-5482 / E50)).